The chain runs to 222 residues: Kinetochore protein Spc25 (222 aa).

A coiled-coil region spans residues 51–100 (RHQRKVGKLQKVIMERREELDKRVSFIEELDRELEATKLRSLAMKDRIKQ).

This sequence belongs to the SPC25 family. As to quaternary structure, component of the Ndc80 complex, which is composed of Ndc80, Nuf2 and Spc25.

The protein localises to the nucleus. Its subcellular location is the chromosome. It localises to the centromere. The protein resides in the kinetochore. Acts as a component of the essential kinetochore-associated Ndc80 complex, which is required for chromosome segregation and spindle checkpoint activity during meiosis and mitosis. Required for kinetochore integrity and the organization of stable microtubule binding sites in the outer plate of the kinetochore. Participates in SAC signaling that responds specifically to disruptions in spindle microtubule dynamics. The NDC80 complex synergistically enhances the affinity of the SKA1 complex for microtubules and may allow the NDC80 complex to track depolymerizing microtubules. This Drosophila sechellia (Fruit fly) protein is Kinetochore protein Spc25.